Consider the following 427-residue polypeptide: Glutamate-1-semialdehyde 2,1-aminomutase (427 aa).

N6-(pyridoxal phosphate)lysine is present on K265.

It belongs to the class-III pyridoxal-phosphate-dependent aminotransferase family. HemL subfamily. In terms of assembly, homodimer. It depends on pyridoxal 5'-phosphate as a cofactor.

It localises to the cytoplasm. It catalyses the reaction (S)-4-amino-5-oxopentanoate = 5-aminolevulinate. It participates in porphyrin-containing compound metabolism; protoporphyrin-IX biosynthesis; 5-aminolevulinate from L-glutamyl-tRNA(Glu): step 2/2. The polypeptide is Glutamate-1-semialdehyde 2,1-aminomutase (Bordetella pertussis (strain Tohama I / ATCC BAA-589 / NCTC 13251)).